Reading from the N-terminus, the 229-residue chain is MRDAWRFAVGTLTALPVRPPTRVDRDTARRAMLLAPLAALPLGLLVAAVLAAGRAVELPPLAVGLLAVGALAASSRALHWDGLSDTVDGLAASYDPARSLAVMRSGTSGPAGVLATVVVAGVQAAALATLLDQPLLAGALVCLSRCALWIVCCTRVPAARADGLGADVARTVPLPVAVLGGLLLSAVGGLVVLVLVRRTVRRFGGVTGDVMGAAVELALAATLLAWAAR.

A run of 6 helical transmembrane segments spans residues 31–51 (AMLL…AVLA), 55–75 (AVEL…AASS), 111–131 (AGVL…ATLL), 134–154 (PLLA…VCCT), 176–196 (VAVL…LVLV), and 208–228 (GDVM…AWAA).

Belongs to the CobS family. It depends on Mg(2+) as a cofactor.

It is found in the cell membrane. It carries out the reaction alpha-ribazole + adenosylcob(III)inamide-GDP = adenosylcob(III)alamin + GMP + H(+). The enzyme catalyses alpha-ribazole 5'-phosphate + adenosylcob(III)inamide-GDP = adenosylcob(III)alamin 5'-phosphate + GMP + H(+). Its pathway is cofactor biosynthesis; adenosylcobalamin biosynthesis; adenosylcobalamin from cob(II)yrinate a,c-diamide: step 7/7. Its function is as follows. Joins adenosylcobinamide-GDP and alpha-ribazole to generate adenosylcobalamin (Ado-cobalamin). Also synthesizes adenosylcobalamin 5'-phosphate from adenosylcobinamide-GDP and alpha-ribazole 5'-phosphate. In Nocardioides sp. (strain ATCC BAA-499 / JS614), this protein is Adenosylcobinamide-GDP ribazoletransferase.